The chain runs to 134 residues: ATP synthase epsilon chain, chloroplastic (134 aa).

This sequence belongs to the ATPase epsilon chain family. F-type ATPases have 2 components, CF(1) - the catalytic core - and CF(0) - the membrane proton channel. CF(1) has five subunits: alpha(3), beta(3), gamma(1), delta(1), epsilon(1). CF(0) has three main subunits: a, b and c.

It localises to the plastid. Its subcellular location is the chloroplast thylakoid membrane. Produces ATP from ADP in the presence of a proton gradient across the membrane. The sequence is that of ATP synthase epsilon chain, chloroplastic from Pyropia yezoensis (Susabi-nori).